We begin with the raw amino-acid sequence, 185 residues long: Dehydrin ERD14 (185 aa).

4 stretches are compositionally biased toward basic and acidic residues: residues 1-13 (MAEE…EQEV), 25-45 (VTDR…KPEE), 52-78 (FEQK…HRSD), and 103-134 (KPTT…KPED). Disordered stretches follow at residues 1–138 (MAEE…GSAV) and 166–185 (EKLP…KDKE). Ala-2 carries the post-translational modification N-acetylalanine. Ser-59 carries the phosphoserine modification. 2 repeat units span residues 112 to 132 (EEEK…HKKP) and 154 to 174 (PVEK…YHPK). The segment at 112–174 (EEEKKGFMEK…KEKLPGYHPK (63 aa)) is 2 X 21 AA repeats, Lys-rich.

This sequence belongs to the plant dehydrin family. In stems, cauline leaves, roots and flowers. Low levels found in maturing seeds. Absent in dry seeds.

Functionally, intrinsically disordered protein acting as a chaperone. Prevents heat-induced aggregation and/or inactivation of various substrates. Binds to acidic phospholipid vesicles without affecting membrane fluidity. The sequence is that of Dehydrin ERD14 (ERD14) from Arabidopsis thaliana (Mouse-ear cress).